Consider the following 133-residue polypeptide: Ribosome-binding factor A (133 aa).

Belongs to the RbfA family. Monomer. Binds 30S ribosomal subunits, but not 50S ribosomal subunits or 70S ribosomes.

Its subcellular location is the cytoplasm. One of several proteins that assist in the late maturation steps of the functional core of the 30S ribosomal subunit. Associates with free 30S ribosomal subunits (but not with 30S subunits that are part of 70S ribosomes or polysomes). Required for efficient processing of 16S rRNA. May interact with the 5'-terminal helix region of 16S rRNA. The polypeptide is Ribosome-binding factor A (Cytophaga hutchinsonii (strain ATCC 33406 / DSM 1761 / CIP 103989 / NBRC 15051 / NCIMB 9469 / D465)).